A 780-amino-acid polypeptide reads, in one-letter code: MMEDNKQLALRIDGAVQSASQEVTNLRAELTATNRRLAELSGGGGGPGSGPGAATSASAAAVTVADSAVATMENHQHGAQVLLREEVVQLQEEVHLLRQMKEMLAKDLEESQGGKCSEVLSATELRVQLVQKEQELARAREALQAMKADRKRLKGEKTDLVSQMQQLYATLESREEQLRDFIRNYEQHRKESEDAVKALAKEKDLLEREKWELRRQAKEATDHAAALRSQLDLKDNRMKELEAELAMAKQSLATLTKDVPKRHSLAMPGETVLNGNQEWVVQADLPLTAAIRQSQQTLYHSHPPHPADRQAVRVSPCHSRQPSVISDASAAEGDRSSTPSDINSPRHRTHSLCNGDSPGPVQKSLHNPIVQSLEDLEDQKRKKKKEKMGFGSISRVFARGKQRKSLDPGLFDDSDSQCSPTRHSLSLSEGEEQMDRLQHVELVRTTPMSHWKAGTVQAWLEVVMAMPMYVKACAENVKSGKVLLSLSDEDLELGLGVCSSLHRRKLRLAIEDYRDAEAGRSLSKAADLDHHWVAKAWLNDIGLSQYSQAFQNHLVDGRMLNSLMKRDLEKHLNVSKKFHQVSILLGIELLYQVNFSREALQERRARCETQNTDPVVWTNQRVLKWVRDIDLKEYADNLTNSGVHGAVLVLEPTFNAEAMATALGIPSGKHILRRHLAEEMSTVFHPANSTGIRESERFGTPPGRASSITRAGKEDGSSNSKYRTGRLPLGKIGRGFSSKEPDYYDDYGSLENEDCGDDDLQGRPEQCRLEEYSSLEVTNV.

Residues 79–261 (AQVLLREEVV…LATLTKDVPK (183 aa)) adopt a coiled-coil conformation. Positions 295 to 430 (QQTLYHSHPP…TRHSLSLSEG (136 aa)) are disordered. S357, S372, and S392 each carry phosphoserine. Residues 416 to 427 (SQCSPTRHSLSL) are compositionally biased toward polar residues. 3 consecutive SAM domains span residues 451–516 (WKAG…YRDA), 529–593 (DHHW…LYQV), and 617–684 (WTNQ…STVF). The segment at 692 to 780 (IRESERFGTP…EYSSLEVTNV (89 aa)) is disordered. Basic and acidic residues predominate over residues 760 to 771 (LQGRPEQCRLEE).

This sequence belongs to the kazrin family.

The protein localises to the cell junction. The protein resides in the nucleus. Its subcellular location is the cytoplasm. It is found in the cytoskeleton. Functionally, component of the cornified envelope of keratinocytes. May be involved in the interplay between adherens junctions and desmosomes. The function in the nucleus is not known. In Rattus norvegicus (Rat), this protein is Kazrin (Kazn).